The primary structure comprises 905 residues: Probable coatomer subunit gamma (905 aa).

HEAT repeat units follow at residues 265-302, 303-340, 374-412, 414-450, and 525-563; these read TQFR…NISD, DDLQ…TRPH, DESV…KFPR, QDSM…YIPE, and KFVQ…RDAF. Ser-604 carries the phosphoserine modification.

The protein belongs to the COPG family. Oligomeric complex that consists of at least the alpha, beta, beta', gamma, delta, epsilon and zeta subunits.

The protein localises to the cytoplasm. The protein resides in the golgi apparatus membrane. It localises to the cytoplasmic vesicle. Its subcellular location is the COPI-coated vesicle membrane. The coatomer is a cytosolic protein complex that binds to dilysine motifs and reversibly associates with Golgi non-clathrin-coated vesicles, which further mediate biosynthetic protein transport from the ER, via the Golgi up to the trans Golgi network. Coatomer complex is required for budding from Golgi membranes, and is essential for the retrograde Golgi-to-ER transport of dilysine-tagged proteins. This is Probable coatomer subunit gamma (sec21) from Schizosaccharomyces pombe (strain 972 / ATCC 24843) (Fission yeast).